Reading from the N-terminus, the 159-residue chain is Transcriptional repressor NrdR (159 aa).

Residues 3 to 34 (CPTCQNTDSRVLESRSADTGKSVRRRRECLNC) fold into a zinc finger. The region spanning 49–139 (ISVIKKDGSR…VYRKFNGVKD (91 aa)) is the ATP-cone domain.

It belongs to the NrdR family. Zn(2+) serves as cofactor.

Functionally, negatively regulates transcription of bacterial ribonucleotide reductase nrd genes and operons by binding to NrdR-boxes. The sequence is that of Transcriptional repressor NrdR from Prochlorococcus marinus subsp. pastoris (strain CCMP1986 / NIES-2087 / MED4).